A 338-amino-acid chain; its full sequence is Decarboxylase macB (338 aa).

Residues histidine 7, histidine 9, histidine 159, and aspartate 283 each coordinate Zn(2+).

It belongs to the metallo-dependent hydrolases superfamily. ACMSD family.

The catalysed reaction is 6-methylsalicylate + H(+) = 3-methylphenol + CO2. It participates in secondary metabolite biosynthesis; terpenoid biosynthesis. Its function is as follows. Decarboxylase; part of the gene cluster that mediates the biosynthesis of macrophorins, isoprenoid epoxycyclohexenones containing cyclized drimane moieties. The first step of the pathway is the synthesis of 6-methylsalicylic acid (6-MSA) by the polyketide synthase macA. 6-MSA is then converted to m-cresol by the decarboxylase macB. The cytochrome P450 monooxygenase macC then catalyzes the oxidation of m-cresol to toluquinol. Epoxidation of toluquinol is then performed by the short chain dehydrogenase macD, with the help of macE, and a further prenylation by macG leads to 7-deacetoxyyanuthone A. The next step is the hydroxylation of C-22 of 7-deacetoxyyanuthone A by the cytochrome P450 monooxygenase macH to yield 22-deacetylyanuthone A. O-Mevalon transferase macI then attaches mevalon to the hydroxyl group of 22-deacetylyanuthone A to produce yanuthone E. The terpene cyclase macJ catalyzes the cyclization of 22-deacetylyanuthone A to macrophorin A. MacJ is also able to catalyze cyclization of yanuthone E and 7-deacetoxyyanuthone A to their corresponding macrophorins. The macJ products can be further modified by macH and macJ, as well as by the FAD-dependent monooxygenase macF, to produce additional macrophorins, including 4'-oxomacrophorin A, 4'-oxomacrophorin D and 4'-oxomacrophorin E. The polypeptide is Decarboxylase macB (Penicillium terrestre).